Reading from the N-terminus, the 43-residue chain is MAKNINQPVAYPIFTFRWLAIHGLAIPTVFFLGGITAMQFIQR.

The chain crosses the membrane as a helical span at residues Trp-18–Gly-34. His-22 is a binding site for heme.

It belongs to the PsbE/PsbF family. In terms of assembly, heterodimer of an alpha subunit and a beta subunit. PSII is composed of 1 copy each of membrane proteins PsbA, PsbB, PsbC, PsbD, PsbE, PsbF, PsbH, PsbI, PsbJ, PsbK, PsbL, PsbM, PsbT, PsbX, PsbY, PsbZ, Psb30/Ycf12, at least 3 peripheral proteins of the oxygen-evolving complex and a large number of cofactors. It forms dimeric complexes. Heme b is required as a cofactor.

The protein localises to the plastid. Its subcellular location is the chloroplast thylakoid membrane. Its function is as follows. This b-type cytochrome is tightly associated with the reaction center of photosystem II (PSII). PSII is a light-driven water:plastoquinone oxidoreductase that uses light energy to abstract electrons from H(2)O, generating O(2) and a proton gradient subsequently used for ATP formation. It consists of a core antenna complex that captures photons, and an electron transfer chain that converts photonic excitation into a charge separation. The chain is Cytochrome b559 subunit beta from Phaeodactylum tricornutum (strain CCAP 1055/1).